Here is a 123-residue protein sequence, read N- to C-terminus: Ribosome-binding factor A (123 aa).

The protein belongs to the RbfA family. In terms of assembly, monomer. Binds 30S ribosomal subunits, but not 50S ribosomal subunits or 70S ribosomes.

It is found in the cytoplasm. Its function is as follows. One of several proteins that assist in the late maturation steps of the functional core of the 30S ribosomal subunit. Associates with free 30S ribosomal subunits (but not with 30S subunits that are part of 70S ribosomes or polysomes). Required for efficient processing of 16S rRNA. May interact with the 5'-terminal helix region of 16S rRNA. This chain is Ribosome-binding factor A, found in Acetivibrio thermocellus (strain ATCC 27405 / DSM 1237 / JCM 9322 / NBRC 103400 / NCIMB 10682 / NRRL B-4536 / VPI 7372) (Clostridium thermocellum).